The following is a 208-amino-acid chain: 2,3-bisphosphoglycerate-dependent phosphoglycerate mutase (208 aa).

Substrate-binding positions include 9–16 (RHGQSEWN), 22–23 (TG), Arg61, 88–91 (ERDY), Lys99, 115–116 (RR), and 159–160 (GN). His10 acts as the Tele-phosphohistidine intermediate in catalysis. The active-site Proton donor/acceptor is Glu88.

This sequence belongs to the phosphoglycerate mutase family. BPG-dependent PGAM subfamily. In terms of assembly, homodimer.

The catalysed reaction is (2R)-2-phosphoglycerate = (2R)-3-phosphoglycerate. It participates in carbohydrate degradation; glycolysis; pyruvate from D-glyceraldehyde 3-phosphate: step 3/5. In terms of biological role, catalyzes the interconversion of 2-phosphoglycerate and 3-phosphoglycerate. The polypeptide is 2,3-bisphosphoglycerate-dependent phosphoglycerate mutase (Methylobacterium sp. (strain 4-46)).